We begin with the raw amino-acid sequence, 358 residues long: Guanidino acid hydrolase, mitochondrial (358 aa).

The N-terminal 36 residues, 1 to 36 (MLRLLRSSWARGLGSGVATWRPSAGLFRPGCPGIRQ), are a transit peptide targeting the mitochondrion. The tract at residues 31-56 (CPGIRQASGASDTPHHQSPSSESPVQ) is disordered. Residues 46 to 56 (HQSPSSESPVQ) are compositionally biased toward low complexity. Mn(2+)-binding residues include Gln168 and His193. The residue at position 199 (Lys199) is an N6-acetyllysine. Lys223 carries the N6-acetyllysine; alternate modification. The residue at position 223 (Lys223) is an N6-succinyllysine; alternate. Mn(2+) is bound at residue Asp284.

It belongs to the arginase family. Agmatinase subfamily. The cofactor is Mn(2+). Detected only in liver.

The protein resides in the mitochondrion. The enzyme catalyses 3-guanidinopropanoate + H2O = urea + beta-alanine. The catalysed reaction is 4-guanidinobutanoate + H2O = urea + 4-aminobutanoate. It carries out the reaction taurocyamine + H2O = urea + taurine. It catalyses the reaction L-arginine + H2O = urea + L-ornithine. It functions in the pathway nitrogen metabolism; urea cycle; L-ornithine and urea from L-arginine: step 1/1. Hydrolyzes linear guanidino acids to form urea and the corresponding amines. Displays specificity for substrates having a negatively charged head group and short chains including taurocyamine, guanidino propanoic and butanoic acids. May protect cells by detoxifying potentially harmful amounts of guanidino acids. Metabolizes L-arginine with low efficiency. The chain is Guanidino acid hydrolase, mitochondrial (Agmat) from Mus musculus (Mouse).